Here is a 348-residue protein sequence, read N- to C-terminus: tRNA N6-adenosine threonylcarbamoyltransferase (348 aa).

Fe cation is bound by residues His118 and His122. Residues 140-144 (LVSGG), Asp173, Gly186, Asp190, and Asn279 each bind substrate. Asp309 contributes to the Fe cation binding site.

The protein belongs to the KAE1 / TsaD family. Fe(2+) is required as a cofactor.

The protein resides in the cytoplasm. The catalysed reaction is L-threonylcarbamoyladenylate + adenosine(37) in tRNA = N(6)-L-threonylcarbamoyladenosine(37) in tRNA + AMP + H(+). In terms of biological role, required for the formation of a threonylcarbamoyl group on adenosine at position 37 (t(6)A37) in tRNAs that read codons beginning with adenine. Is involved in the transfer of the threonylcarbamoyl moiety of threonylcarbamoyl-AMP (TC-AMP) to the N6 group of A37, together with TsaE and TsaB. TsaD likely plays a direct catalytic role in this reaction. This chain is tRNA N6-adenosine threonylcarbamoyltransferase, found in Lactiplantibacillus plantarum (strain ATCC BAA-793 / NCIMB 8826 / WCFS1) (Lactobacillus plantarum).